The chain runs to 734 residues: Phosphoribosylformylglycinamidine synthase subunit PurL (734 aa).

Histidine 49 is a catalytic residue. ATP-binding residues include tyrosine 52 and lysine 91. Mg(2+) is bound at residue glutamate 93. Substrate-binding positions include 94–97 (SHNH) and arginine 116. Histidine 95 serves as the catalytic Proton acceptor. Aspartate 117 is a binding site for Mg(2+). Position 240 (glutamine 240) interacts with substrate. Aspartate 268 lines the Mg(2+) pocket. Position 312–314 (312–314 (ESQ)) interacts with substrate. Residues aspartate 491 and glycine 528 each coordinate ATP. Asparagine 529 contributes to the Mg(2+) binding site. Residue serine 531 participates in substrate binding.

The protein belongs to the FGAMS family. Monomer. Part of the FGAM synthase complex composed of 1 PurL, 1 PurQ and 2 PurS subunits.

It localises to the cytoplasm. The catalysed reaction is N(2)-formyl-N(1)-(5-phospho-beta-D-ribosyl)glycinamide + L-glutamine + ATP + H2O = 2-formamido-N(1)-(5-O-phospho-beta-D-ribosyl)acetamidine + L-glutamate + ADP + phosphate + H(+). It functions in the pathway purine metabolism; IMP biosynthesis via de novo pathway; 5-amino-1-(5-phospho-D-ribosyl)imidazole from N(2)-formyl-N(1)-(5-phospho-D-ribosyl)glycinamide: step 1/2. Its function is as follows. Part of the phosphoribosylformylglycinamidine synthase complex involved in the purines biosynthetic pathway. Catalyzes the ATP-dependent conversion of formylglycinamide ribonucleotide (FGAR) and glutamine to yield formylglycinamidine ribonucleotide (FGAM) and glutamate. The FGAM synthase complex is composed of three subunits. PurQ produces an ammonia molecule by converting glutamine to glutamate. PurL transfers the ammonia molecule to FGAR to form FGAM in an ATP-dependent manner. PurS interacts with PurQ and PurL and is thought to assist in the transfer of the ammonia molecule from PurQ to PurL. The polypeptide is Phosphoribosylformylglycinamidine synthase subunit PurL (Zymomonas mobilis subsp. mobilis (strain ATCC 31821 / ZM4 / CP4)).